Reading from the N-terminus, the 370-residue chain is Small ribosomal subunit biogenesis GTPase RsgA 1 (370 aa).

The CP-type G domain maps to 97–255; it reads QTQLDRPPIA…LADTPGFNQP (159 aa). Residues 146–149 and 197–205 each bind GTP; these read NKSD and GPSGVGKSS. Zn(2+) contacts are provided by cysteine 280, cysteine 285, histidine 287, and cysteine 293. Positions 325–370 are disordered; that stretch reads PESTLKLKTKGKGQSQYEPKLESKKYRRTSRRTQVQGLQDLYQEEE.

It belongs to the TRAFAC class YlqF/YawG GTPase family. RsgA subfamily. Monomer. Associates with 30S ribosomal subunit, binds 16S rRNA. The cofactor is Zn(2+).

The protein localises to the cytoplasm. Functionally, one of several proteins that assist in the late maturation steps of the functional core of the 30S ribosomal subunit. Helps release RbfA from mature subunits. May play a role in the assembly of ribosomal proteins into the subunit. Circularly permuted GTPase that catalyzes slow GTP hydrolysis, GTPase activity is stimulated by the 30S ribosomal subunit. The sequence is that of Small ribosomal subunit biogenesis GTPase RsgA 1 from Nostoc sp. (strain PCC 7120 / SAG 25.82 / UTEX 2576).